Here is a 90-residue protein sequence, read N- to C-terminus: RNA-binding protein Hfq (90 aa).

Positions 9–68 (DPFLNALRRERVPVSIYLVNGIKLQGQVESFDQFVILLKNTVSQMVYKHAISTVVPARPF) constitute a Sm domain. Positions 71-90 (TGHQNAQGGYGPQDDVPSGE) are disordered.

Belongs to the Hfq family. As to quaternary structure, homohexamer.

Its function is as follows. RNA chaperone that binds small regulatory RNA (sRNAs) and mRNAs to facilitate mRNA translational regulation in response to envelope stress, environmental stress and changes in metabolite concentrations. Also binds with high specificity to tRNAs. In Shewanella putrefaciens (strain CN-32 / ATCC BAA-453), this protein is RNA-binding protein Hfq.